The sequence spans 123 residues: Small ribosomal subunit protein uS12 (123 aa).

The disordered stretch occupies residues 1-23; that stretch reads MPTISQLVKKGREKVEKKTKSPA. Residue aspartate 89 is modified to 3-methylthioaspartic acid.

The protein belongs to the universal ribosomal protein uS12 family. As to quaternary structure, part of the 30S ribosomal subunit. Contacts proteins S8 and S17. May interact with IF1 in the 30S initiation complex.

In terms of biological role, with S4 and S5 plays an important role in translational accuracy. Interacts with and stabilizes bases of the 16S rRNA that are involved in tRNA selection in the A site and with the mRNA backbone. Located at the interface of the 30S and 50S subunits, it traverses the body of the 30S subunit contacting proteins on the other side and probably holding the rRNA structure together. The combined cluster of proteins S8, S12 and S17 appears to hold together the shoulder and platform of the 30S subunit. In Thermodesulfovibrio yellowstonii (strain ATCC 51303 / DSM 11347 / YP87), this protein is Small ribosomal subunit protein uS12.